Reading from the N-terminus, the 164-residue chain is Ribosome-binding factor A (164 aa).

Belongs to the RbfA family. As to quaternary structure, monomer. Binds 30S ribosomal subunits, but not 50S ribosomal subunits or 70S ribosomes.

It localises to the cytoplasm. One of several proteins that assist in the late maturation steps of the functional core of the 30S ribosomal subunit. Associates with free 30S ribosomal subunits (but not with 30S subunits that are part of 70S ribosomes or polysomes). Required for efficient processing of 16S rRNA. May interact with the 5'-terminal helix region of 16S rRNA. This Mycobacterium leprae (strain Br4923) protein is Ribosome-binding factor A.